We begin with the raw amino-acid sequence, 140 residues long: ATP synthase epsilon chain (140 aa).

The protein belongs to the ATPase epsilon chain family. In terms of assembly, F-type ATPases have 2 components, CF(1) - the catalytic core - and CF(0) - the membrane proton channel. CF(1) has five subunits: alpha(3), beta(3), gamma(1), delta(1), epsilon(1). CF(0) has three main subunits: a, b and c.

It localises to the cell inner membrane. In terms of biological role, produces ATP from ADP in the presence of a proton gradient across the membrane. The sequence is that of ATP synthase epsilon chain from Saccharophagus degradans (strain 2-40 / ATCC 43961 / DSM 17024).